Consider the following 549-residue polypeptide: Glucose-6-phosphate isomerase (549 aa).

Residue Glu355 is the Proton donor of the active site. Active-site residues include His386 and Lys514.

Belongs to the GPI family.

The protein resides in the cytoplasm. It catalyses the reaction alpha-D-glucose 6-phosphate = beta-D-fructose 6-phosphate. The protein operates within carbohydrate biosynthesis; gluconeogenesis. Its pathway is carbohydrate degradation; glycolysis; D-glyceraldehyde 3-phosphate and glycerone phosphate from D-glucose: step 2/4. Catalyzes the reversible isomerization of glucose-6-phosphate to fructose-6-phosphate. The protein is Glucose-6-phosphate isomerase of Buchnera aphidicola subsp. Acyrthosiphon pisum (strain 5A).